Here is a 159-residue protein sequence, read N- to C-terminus: Large ribosomal subunit protein uL11 (159 aa).

It belongs to the universal ribosomal protein uL11 family. As to quaternary structure, part of the ribosomal stalk of the 50S ribosomal subunit. Interacts with L10 and the large rRNA to form the base of the stalk. L10 forms an elongated spine to which L12 dimers bind in a sequential fashion forming a multimeric L10(L12)X complex.

Forms part of the ribosomal stalk which helps the ribosome interact with GTP-bound translation factors. The protein is Large ribosomal subunit protein uL11 of Methanococcus vannielii (strain ATCC 35089 / DSM 1224 / JCM 13029 / OCM 148 / SB).